The sequence spans 231 residues: Octanoyltransferase (231 aa).

The BPL/LPL catalytic domain occupies 29-231 (PQDPDLLWLC…GRQLCIWLAP (203 aa)). Substrate contacts are provided by residues 68-75 (RGGQVTFH), 164-166 (ALG), and 177-179 (GVA). Residue Cys195 is the Acyl-thioester intermediate of the active site.

Belongs to the LipB family.

The protein resides in the cytoplasm. The enzyme catalyses octanoyl-[ACP] + L-lysyl-[protein] = N(6)-octanoyl-L-lysyl-[protein] + holo-[ACP] + H(+). It participates in protein modification; protein lipoylation via endogenous pathway; protein N(6)-(lipoyl)lysine from octanoyl-[acyl-carrier-protein]: step 1/2. In terms of biological role, catalyzes the transfer of endogenously produced octanoic acid from octanoyl-acyl-carrier-protein onto the lipoyl domains of lipoate-dependent enzymes. Lipoyl-ACP can also act as a substrate although octanoyl-ACP is likely to be the physiological substrate. This Verminephrobacter eiseniae (strain EF01-2) protein is Octanoyltransferase.